Consider the following 109-residue polypeptide: Flowering-promoting factor 1-like protein 1 (109 aa).

A D-box motif is present at residues 73-81 (RGSLDLISL).

This sequence belongs to the FPF1 family. As to quaternary structure, interacts with RPT4. Ubiquitinated. RPT4 mediates its proteasome-dependent degradation. As to expression, specifically expressed in the apical meristem, the elongation zone of root tip, steles of the branch zone, and the young lateral root. Also expressed in spikes. Expressed in roots and spikes (at protein level).

It localises to the cytoplasm. The protein localises to the nucleus. GTP-binding protein that functions in the development of root systems, which are mediated by auxin. Acts as a cell cycle regulator during root development. Proteasome-mediated degradation of the protein is necessary for the transition of metaphase to anaphase in mitosis. This is Flowering-promoting factor 1-like protein 1 (RAA1) from Oryza sativa subsp. japonica (Rice).